The following is a 310-amino-acid chain: Protein-methionine-sulfoxide reductase catalytic subunit MsrP (310 aa).

Residues 1–45 (MRKTSSPRIAPSEITPRDLYHDRRRFMQAAAGAAAAALWPHWLSA) constitute a signal peptide (tat-type signal). Mo-molybdopterin is bound by residues Asn73, 76-77 (YE), Cys131, Thr166, Asn214, Arg219, and 230-232 (SAK).

It belongs to the MsrP family. Heterodimer of a catalytic subunit (MsrP) and a heme-binding subunit (MsrQ). Mo-molybdopterin serves as cofactor. In terms of processing, predicted to be exported by the Tat system. The position of the signal peptide cleavage has not been experimentally proven.

Its subcellular location is the periplasm. It catalyses the reaction L-methionyl-[protein] + a quinone + H2O = L-methionyl-(S)-S-oxide-[protein] + a quinol. The enzyme catalyses L-methionyl-[protein] + a quinone + H2O = L-methionyl-(R)-S-oxide-[protein] + a quinol. Functionally, part of the MsrPQ system that repairs oxidized periplasmic proteins containing methionine sulfoxide residues (Met-O), using respiratory chain electrons. Thus protects these proteins from oxidative-stress damage caused by reactive species of oxygen and chlorine generated by the host defense mechanisms. MsrPQ is essential for the maintenance of envelope integrity under bleach stress, rescuing a wide series of structurally unrelated periplasmic proteins from methionine oxidation. The catalytic subunit MsrP is non-stereospecific, being able to reduce both (R-) and (S-) diastereoisomers of methionine sulfoxide. This is Protein-methionine-sulfoxide reductase catalytic subunit MsrP from Methylococcus capsulatus (strain ATCC 33009 / NCIMB 11132 / Bath).